Here is a 201-residue protein sequence, read N- to C-terminus: 3-isopropylmalate dehydratase small subunit (201 aa).

Belongs to the LeuD family. LeuD type 1 subfamily. In terms of assembly, heterodimer of LeuC and LeuD.

The catalysed reaction is (2R,3S)-3-isopropylmalate = (2S)-2-isopropylmalate. It participates in amino-acid biosynthesis; L-leucine biosynthesis; L-leucine from 3-methyl-2-oxobutanoate: step 2/4. Functionally, catalyzes the isomerization between 2-isopropylmalate and 3-isopropylmalate, via the formation of 2-isopropylmaleate. The sequence is that of 3-isopropylmalate dehydratase small subunit from Nitrobacter winogradskyi (strain ATCC 25391 / DSM 10237 / CIP 104748 / NCIMB 11846 / Nb-255).